Here is an 89-residue protein sequence, read N- to C-terminus: Defensin-like protein 108 (89 aa).

Residues 1–20 (MTSLIAFLFTVLVIVSSVHC) form the signal peptide. Disulfide bonds link cysteine 39-cysteine 81, cysteine 49-cysteine 71, cysteine 57-cysteine 79, and cysteine 61-cysteine 80.

The protein belongs to the DEFL family.

The protein resides in the secreted. The chain is Defensin-like protein 108 (LCR51) from Arabidopsis thaliana (Mouse-ear cress).